A 270-amino-acid chain; its full sequence is Cytochrome c oxidase subunit 3 (270 aa).

Helical transmembrane passes span Pro-21–Phe-41, Gly-46–Trp-66, Gly-90–Phe-110, Phe-131–Ala-151, Ala-167–Tyr-187, Phe-205–Val-225, and Trp-248–Gly-268.

Belongs to the cytochrome c oxidase subunit 3 family. As to quaternary structure, component of the cytochrome c oxidase (complex IV, CIV), a multisubunit enzyme composed of a catalytic core of 3 subunits and several supernumerary subunits. The complex exists as a monomer or a dimer and forms supercomplexes (SCs) in the inner mitochondrial membrane with ubiquinol-cytochrome c oxidoreductase (cytochrome b-c1 complex, complex III, CIII).

The protein resides in the mitochondrion inner membrane. The enzyme catalyses 4 Fe(II)-[cytochrome c] + O2 + 8 H(+)(in) = 4 Fe(III)-[cytochrome c] + 2 H2O + 4 H(+)(out). Component of the cytochrome c oxidase, the last enzyme in the mitochondrial electron transport chain which drives oxidative phosphorylation. The respiratory chain contains 3 multisubunit complexes succinate dehydrogenase (complex II, CII), ubiquinol-cytochrome c oxidoreductase (cytochrome b-c1 complex, complex III, CIII) and cytochrome c oxidase (complex IV, CIV), that cooperate to transfer electrons derived from NADH and succinate to molecular oxygen, creating an electrochemical gradient over the inner membrane that drives transmembrane transport and the ATP synthase. Cytochrome c oxidase is the component of the respiratory chain that catalyzes the reduction of oxygen to water. Electrons originating from reduced cytochrome c in the intermembrane space (IMS) are transferred via the dinuclear copper A center (CU(A)) of subunit 2 and heme A of subunit 1 to the active site in subunit 1, a binuclear center (BNC) formed by heme A3 and copper B (CU(B)). The BNC reduces molecular oxygen to 2 water molecules using 4 electrons from cytochrome c in the IMS and 4 protons from the mitochondrial matrix. This is Cytochrome c oxidase subunit 3 (COX3) from Cyanidium caldarium (Red alga).